The following is a 433-amino-acid chain: 5-methylthioadenosine/S-adenosylhomocysteine deaminase (433 aa).

Residues His-67 and His-69 each coordinate Zn(2+). 4 residues coordinate substrate: Glu-96, Arg-148, Arg-158, and His-186. A Zn(2+)-binding site is contributed by His-213. Substrate contacts are provided by Glu-216 and Asp-301. Position 301 (Asp-301) interacts with Zn(2+).

The protein belongs to the metallo-dependent hydrolases superfamily. MTA/SAH deaminase family. Requires Zn(2+) as cofactor.

It catalyses the reaction S-adenosyl-L-homocysteine + H2O + H(+) = S-inosyl-L-homocysteine + NH4(+). The catalysed reaction is S-methyl-5'-thioadenosine + H2O + H(+) = S-methyl-5'-thioinosine + NH4(+). Its function is as follows. Catalyzes the deamination of 5-methylthioadenosine and S-adenosyl-L-homocysteine into 5-methylthioinosine and S-inosyl-L-homocysteine, respectively. Is also able to deaminate adenosine. In Pelotomaculum thermopropionicum (strain DSM 13744 / JCM 10971 / SI), this protein is 5-methylthioadenosine/S-adenosylhomocysteine deaminase.